Consider the following 133-residue polypeptide: Small ribosomal subunit protein uS8 (133 aa).

The protein belongs to the universal ribosomal protein uS8 family. In terms of assembly, part of the 30S ribosomal subunit. Contacts proteins S5 and S12.

One of the primary rRNA binding proteins, it binds directly to 16S rRNA central domain where it helps coordinate assembly of the platform of the 30S subunit. The polypeptide is Small ribosomal subunit protein uS8 (Prochlorococcus marinus (strain MIT 9301)).